Reading from the N-terminus, the 130-residue chain is Protein YoeA (130 aa).

The N-terminal stretch at 1–28 is a signal peptide; the sequence is MLYNIPCRIYILSTLSLCISGIVSTATA. The region spanning 51-130 is the TBDR plug domain; sequence NLWESPATIQ…RCRRYSRGER (80 aa).

The protein belongs to the TonB-dependent receptor family.

The protein is Protein YoeA (yoeA) of Escherichia coli (strain K12).